The following is a 121-amino-acid chain: Large ribosomal subunit protein bL21c (121 aa).

Belongs to the bacterial ribosomal protein bL21 family. As to quaternary structure, part of the 50S ribosomal subunit.

It is found in the plastid. Its subcellular location is the chloroplast. This protein binds to 23S rRNA. This chain is Large ribosomal subunit protein bL21c, found in Chaetosphaeridium globosum (Charophycean green alga).